A 528-amino-acid polypeptide reads, in one-letter code: J domain-containing protein APJ1 (528 aa).

The 70-residue stretch at 4-73 (NTSLYDSLNV…RALYDQYGTT (70 aa)) folds into the J domain. The segment at 193–274 (GKTAKLGLNR…CQGLGFIKER (82 aa)) adopts a CR-type zinc-finger fold. CXXCXGXG motif repeat units follow at residues 206-213 (CSVCDGHG), 218-225 (CTCKTCKG), 246-253 (CADCGGAG), and 262-269 (CQQCQGLG). Residues 485 to 499 (NERDSRKRNNRRFDE) show a composition bias toward basic and acidic residues. Residues 485–528 (NERDSRKRNNRRFDESNINNNNETKRNKYSSPVSGFYDHDINGY) are disordered.

It is found in the cytoplasm. It localises to the nucleus. In terms of biological role, putative chaperone involved in protein folding. Interferes with propagation of [PSI+] prion when overproduced. The protein is J domain-containing protein APJ1 (APJ1) of Saccharomyces cerevisiae (strain ATCC 204508 / S288c) (Baker's yeast).